The primary structure comprises 484 residues: Ureidoglycolate hydrolase (484 aa).

The first 28 residues, 1–28 (MATSAAARFLAALAGAAVLLVLLGGAAG), serve as a signal peptide directing secretion. Mn(2+) is bound by residues His-148, Asp-159, Glu-194, and His-262. 2 substrate regions span residues 193-194 (EE) and 262-265 (HIEQ). The tract at residues 284 to 399 (APASIKVEFE…LSEFKIINQD (116 aa)) is involved in dimerization. Substrate contacts are provided by His-298, Asn-348, and Arg-361. The interval 431 to 432 (YH) is substrate. His-456 contacts Mn(2+). His-456 is a binding site for substrate.

This sequence belongs to the peptidase M20 family. Homodimer. Mn(2+) is required as a cofactor. It depends on Ni(2+) as a cofactor. Co(2+) serves as cofactor.

Its subcellular location is the endoplasmic reticulum. The catalysed reaction is (S)-ureidoglycolate + H2O + 2 H(+) = glyoxylate + 2 NH4(+) + CO2. Its pathway is nitrogen metabolism; (S)-allantoin degradation; glyoxylate from (S)-ureidoglycolate: step 1/1. Its function is as follows. Involved in the catabolism of purine nucleotides. The sequential activity of AAH, UGLYAH and UAH allows a complete purine breakdown without the intermediate generation of urea. The sequence is that of Ureidoglycolate hydrolase from Oryza sativa subsp. japonica (Rice).